The sequence spans 603 residues: Isocitrate dehydrogenase kinase/phosphatase (603 aa).

Residues 327–333 (APGIKGL) and Lys348 contribute to the ATP site. Asp383 is an active-site residue.

It belongs to the AceK family.

It localises to the cytoplasm. The catalysed reaction is L-seryl-[isocitrate dehydrogenase] + ATP = O-phospho-L-seryl-[isocitrate dehydrogenase] + ADP + H(+). Bifunctional enzyme which can phosphorylate or dephosphorylate isocitrate dehydrogenase (IDH) on a specific serine residue. This is a regulatory mechanism which enables bacteria to bypass the Krebs cycle via the glyoxylate shunt in response to the source of carbon. When bacteria are grown on glucose, IDH is fully active and unphosphorylated, but when grown on acetate or ethanol, the activity of IDH declines drastically concomitant with its phosphorylation. The polypeptide is Isocitrate dehydrogenase kinase/phosphatase (Burkholderia thailandensis (strain ATCC 700388 / DSM 13276 / CCUG 48851 / CIP 106301 / E264)).